The primary structure comprises 390 residues: tRNA (guanine(26)-N(2))-dimethyltransferase (390 aa).

One can recognise a Trm1 methyltransferase domain in the interval 4–378 (HIIEEGLVKI…MPLDELKQLI (375 aa)). Residues Arg-37, Arg-67, Asp-85, Asp-112, and Ala-113 each coordinate S-adenosyl-L-methionine. Zn(2+) contacts are provided by Cys-245, Cys-248, Cys-265, and Cys-268.

This sequence belongs to the class I-like SAM-binding methyltransferase superfamily. Trm1 family.

It catalyses the reaction guanosine(26) in tRNA + 2 S-adenosyl-L-methionine = N(2)-dimethylguanosine(26) in tRNA + 2 S-adenosyl-L-homocysteine + 2 H(+). Functionally, dimethylates a single guanine residue at position 26 of a number of tRNAs using S-adenosyl-L-methionine as donor of the methyl groups. The sequence is that of tRNA (guanine(26)-N(2))-dimethyltransferase from Methanosphaera stadtmanae (strain ATCC 43021 / DSM 3091 / JCM 11832 / MCB-3).